Here is a 53-residue protein sequence, read N- to C-terminus: Conotoxin Cal6.31 (53 aa).

Positions 1-24 (MKLTCVLIAAVLLLAVCQLDSADA) are cleaved as a signal peptide. 3 cysteine pairs are disulfide-bonded: cysteine 29–cysteine 43, cysteine 36–cysteine 47, and cysteine 42–cysteine 51.

The protein belongs to the conotoxin O1 superfamily. In terms of tissue distribution, expressed by the venom duct.

Its subcellular location is the secreted. Functionally, probable neurotoxin. The polypeptide is Conotoxin Cal6.31 (Californiconus californicus (California cone)).